The sequence spans 666 residues: Peptidase S41 family protein phomP1 (666 aa).

The first 27 residues, 1-27, serve as a signal peptide directing secretion; that stretch reads MSSFLVQTAVVRLFLLGVVFWFPFALS. N-linked (GlcNAc...) asparagine glycosylation is found at Asn-70, Asn-214, and Asn-234. A peptidase S41 domain region spans residues 303-504; it reads DVAVLQITSF…LLQAQGVRTV (202 aa). 2 N-linked (GlcNAc...) asparagine glycosylation sites follow: Asn-555 and Asn-612.

This sequence belongs to the peptidase S41A family.

The protein operates within mycotoxin biosynthesis. Peptidase S41 family protein; part of the gene cluster that mediates the biosynthesis of the phomopsins, a group of hexapeptide mycotoxins which infects lupins and causes lupinosis disease in livestock. Within the pathway, phomP1 and phomP1' are probably involved in the processing of the phomA and phomA' precursors. The pathway starts with the processing of the precursor phomA by several endopeptidases including kexin proteases as well as the cluster-specific S41 family peptidase phomP1 and the oligopeptidase phomG to produce 10 identical copies of the hexapeptide Tyr-Val-Ile-Pro-Ile-Asp. After being excised from the precursor peptide, the core peptides are cyclized and modified post-translationally by enzymes encoded within the gene cluster. The timing and order of proteolysis of the phomA precursor and PTMs are still unknown. Two tyrosinase-like enzymes, phomQ1 and phomQ2, catalyze the chlorination and hydroxylation of Tyr, respectively. PhomYb, is proposed to be involved in the construction of the macrocyclic structure. The other 4 ustYa family proteins may be involved in PTMs that generate the unique structure of phomopsin A. PhomYa is required for the hydroxylation of C-beta of Tyr. PhomYc, phomYd, and phomYe are responsible for the biosynthesis of 2,3-dehydroisoleucine (dIle), 2,3-dehydroaspartic acid (dAsp), and 3,4-dehydroproline (dPro), respectively. While dIle formation by phomYc is indispensable for the installation of dAsp by phomYd, the order of the other PTMs have not been elucidated yet. Most of the biosynthetic enzymes likely have broad substrate specificity, and thus, there might be a metabolic grid from a precursor to phomopsin A. The enzyme(s) responsible for the biosynthesis of 3,4-dehydrovaline (dVal) have also not been identified yet. Finally, phomM acts as an S-adenosylmethionine-dependent alpha-N-methyltransferase that catalyzes two successive N-methylation reactions, converting N-desmethyl-phomopsin A to phomopsin A and phomopsin A further to an N,N-dimethylated congener called phomopsin E. The chain is Peptidase S41 family protein phomP1 from Diaporthe leptostromiformis (Lupinosis disease fungus).